Reading from the N-terminus, the 520-residue chain is Alpha-1B adrenergic receptor (520 aa).

Over 1 to 45 the chain is Extracellular; the sequence is MNPDLDTGHNTSAPAHWGELKNANFTGPNQTSSNSTLPQLDITRA. 4 N-linked (GlcNAc...) asparagine glycosylation sites follow: Asn-10, Asn-24, Asn-29, and Asn-34. The helical transmembrane segment at 46–70 threads the bilayer; sequence ISVGLVLGAFILFAIVGNILVILSV. Residues 71 to 83 lie on the Cytoplasmic side of the membrane; the sequence is ACNRHLRTPTNYF. The helical transmembrane segment at 84 to 105 threads the bilayer; the sequence is IVNLAMADLLLSFTVLPFSAAL. Topologically, residues 106-115 are extracellular; that stretch reads EVLGYWVLGR. Residues 116 to 141 traverse the membrane as a helical segment; the sequence is IFCDIWAAVDVLCCTASILSLCAISI. A disulfide bond links Cys-118 and Cys-195. The Cytoplasmic segment spans residues 142–161; that stretch reads DRYIGVRYSLQYPTLVTRRK. A helical transmembrane segment spans residues 162–184; the sequence is AILALLSVWVLSTVISIGPLLGW. At 185–201 the chain is on the extracellular side; the sequence is KEPAPNDDKECGVTEEP. Residues 202-224 form a helical membrane-spanning segment; the sequence is FYALFSSLGSFYIPLAVILVMYC. Over 225 to 295 the chain is Cytoplasmic; the sequence is RVYIVAKRTT…FSREKKAAKT (71 aa). Thr-264 is subject to Phosphothreonine. The helical transmembrane segment at 296 to 319 threads the bilayer; it reads LGIVVGMFILCWLPFFIALPLGSL. Over 320–326 the chain is Extracellular; that stretch reads FSTLKPP. The chain crosses the membrane as a helical span at residues 327–351; it reads DAVFKVVFWLGYFNSCLNPIIYPCS. At 352 to 520 the chain is on the cytoplasmic side; the sequence is SKEFKRAFVR…SNMPLAPGQF (169 aa). Cys-365 carries S-palmitoyl cysteine lipidation. Residues 368–380 carry the Nuclear localization signal motif; sequence RGRGRRRRRRRRR. Disordered stretches follow at residues 394 to 432 and 479 to 520; these read GGSL…GYLG and LTEP…PGQF.

The protein belongs to the G-protein coupled receptor 1 family. Adrenergic receptor subfamily. ADRA1B sub-subfamily. Homo- and heterooligomer. Heterooligomerizes with ADRA1B homooligomers in cardiac myocytes. Interacts with CAVIN4.

The protein localises to the nucleus membrane. The protein resides in the cell membrane. It is found in the cytoplasm. It localises to the membrane. Its subcellular location is the caveola. Its function is as follows. This alpha-adrenergic receptor mediates its action by association with G proteins that activate a phosphatidylinositol-calcium second messenger system. Its effect is mediated by G(q) and G(11) proteins. Nuclear ADRA1A-ADRA1B heterooligomers regulate phenylephrine (PE)-stimulated ERK signaling in cardiac myocytes. The chain is Alpha-1B adrenergic receptor (ADRA1B) from Homo sapiens (Human).